An 88-amino-acid polypeptide reads, in one-letter code: Large ribosomal subunit protein bL27 (88 aa).

Positions 1–21 (MAHKKGASSSRNGRDSAAHRL) are disordered.

The protein belongs to the bacterial ribosomal protein bL27 family.

In Mycobacterium ulcerans (strain Agy99), this protein is Large ribosomal subunit protein bL27.